Reading from the N-terminus, the 285-residue chain is Dermonecrotic toxin LiSicTox-alphaIA2aii (285 aa).

The propeptide occupies 1 to 5 (DVEER). Residue H17 is part of the active site. The Mg(2+) site is built by E37 and D39. The active-site Nucleophile is H53. Disulfide bonds link C57–C63 and C59–C202. D97 provides a ligand contact to Mg(2+). N-linked (GlcNAc...) asparagine glycosylation occurs at N262.

Belongs to the arthropod phospholipase D family. Class II subfamily. Class IIa sub-subfamily. The cofactor is Mg(2+). In terms of tissue distribution, expressed by the venom gland.

It localises to the secreted. The catalysed reaction is an N-(acyl)-sphingosylphosphocholine = an N-(acyl)-sphingosyl-1,3-cyclic phosphate + choline. The enzyme catalyses an N-(acyl)-sphingosylphosphoethanolamine = an N-(acyl)-sphingosyl-1,3-cyclic phosphate + ethanolamine. It catalyses the reaction a 1-acyl-sn-glycero-3-phosphocholine = a 1-acyl-sn-glycero-2,3-cyclic phosphate + choline. It carries out the reaction a 1-acyl-sn-glycero-3-phosphoethanolamine = a 1-acyl-sn-glycero-2,3-cyclic phosphate + ethanolamine. In terms of biological role, dermonecrotic toxins cleave the phosphodiester linkage between the phosphate and headgroup of certain phospholipids (sphingolipid and lysolipid substrates), forming an alcohol (often choline) and a cyclic phosphate. This toxin acts on sphingomyelin (SM) with high activity. It may also act on ceramide phosphoethanolamine (CPE), lysophosphatidylcholine (LPC) and lysophosphatidylethanolamine (LPE), but not on lysophosphatidylserine (LPS), and lysophosphatidylglycerol (LPG). It acts by transphosphatidylation, releasing exclusively cyclic phosphate products as second products. Shows high hemolytic activity. Induces dermonecrosis, vascular permeability, edema, inflammatory response, and platelet aggregation. Also shows cytotoxicity against renal epithelial cells. In addition, also induces hemolysis in a complement-dependent manner and probably also in a complement-independent manner. The hemolysis provoked in a complement-independent manner may be composed of several steps. The toxin may bind to erythrocyte membranes, may hydrolyze membrane phospholipids (SM and LPC) thus generating metabolism products that may cause hemolysis, probably by provoking an increase of calcium inside cells. The calcium influx may be due to the opening of L-type calcium channels, since L-type calcium channel blockers inhibit calcium influx. In vivo, is lethal to mice when intraperitoneally injected. This Loxosceles intermedia (Brown spider) protein is Dermonecrotic toxin LiSicTox-alphaIA2aii.